Reading from the N-terminus, the 84-residue chain is Small ribosomal subunit protein bS18 (84 aa).

This sequence belongs to the bacterial ribosomal protein bS18 family. As to quaternary structure, part of the 30S ribosomal subunit. Forms a tight heterodimer with protein bS6.

Binds as a heterodimer with protein bS6 to the central domain of the 16S rRNA, where it helps stabilize the platform of the 30S subunit. This chain is Small ribosomal subunit protein bS18, found in Clostridium kluyveri (strain NBRC 12016).